The sequence spans 91 residues: Thioredoxin (91 aa).

The Thioredoxin domain occupies 2–91; that stretch reads SDSIVHVTDD…SRQSEVEATK (90 aa). Cysteines 33 and 36 form a disulfide.

It belongs to the thioredoxin family.

In terms of biological role, participates in various redox reactions through the reversible oxidation of its active center dithiol to a disulfide and catalyzes dithiol-disulfide exchange reactions. The protein is Thioredoxin (trxA) of Thiocapsa roseopersicina.